We begin with the raw amino-acid sequence, 505 residues long: ATP synthase subunit alpha (505 aa).

Position 170–177 (170–177 (GDRQTGKT)) interacts with ATP.

This sequence belongs to the ATPase alpha/beta chains family. As to quaternary structure, F-type ATPases have 2 components, CF(1) - the catalytic core - and CF(0) - the membrane proton channel. CF(1) has five subunits: alpha(3), beta(3), gamma(1), delta(1), epsilon(1). CF(0) has four main subunits: a(1), b(1), b'(1) and c(9-12).

The protein localises to the cellular thylakoid membrane. The enzyme catalyses ATP + H2O + 4 H(+)(in) = ADP + phosphate + 5 H(+)(out). Its function is as follows. Produces ATP from ADP in the presence of a proton gradient across the membrane. The alpha chain is a regulatory subunit. The protein is ATP synthase subunit alpha of Synechococcus elongatus (strain ATCC 33912 / PCC 7942 / FACHB-805) (Anacystis nidulans R2).